The chain runs to 464 residues: NADH dehydrogenase [ubiquinone] flavoprotein 1, mitochondrial (464 aa).

The N-terminal 20 residues, 1-20, are a transit peptide targeting the mitochondrion; that stretch reads MLATRRLLGWSLPARVSVRF. Residue Lys-81 is modified to N6-acetyllysine; alternate. N6-succinyllysine; alternate is present on Lys-81. 87–96 provides a ligand contact to NADH; that stretch reads GRGGAGFPTG. An N6-acetyllysine modification is found at Lys-104. 199–247 is an FMN binding site; it reads RGAGAYICGEETALIESIEGKQGKPRLKPPFPADVGVFGCPTTVANVET. Arg-257 is modified (omega-N-methylarginine). Position 375 is an N6-acetyllysine (Lys-375). Residues Cys-379, Cys-382, Cys-385, and Cys-425 each contribute to the [4Fe-4S] cluster site.

The protein belongs to the complex I 51 kDa subunit family. As to quaternary structure, core subunit of respiratory chain NADH dehydrogenase (Complex I) which is composed of 45 different subunits. This is a component of the flavoprotein-sulfur (FP) fragment of the enzyme. Interacts with RAB5IF. FMN serves as cofactor. The cofactor is [4Fe-4S] cluster.

It is found in the mitochondrion inner membrane. The catalysed reaction is a ubiquinone + NADH + 5 H(+)(in) = a ubiquinol + NAD(+) + 4 H(+)(out). Its function is as follows. Core subunit of the mitochondrial membrane respiratory chain NADH dehydrogenase (Complex I) which catalyzes electron transfer from NADH through the respiratory chain, using ubiquinone as an electron acceptor. Part of the peripheral arm of the enzyme, where the electrons from NADH are accepted by flavin mononucleotide (FMN) and then passed along a chain of iron-sulfur clusters by electron tunnelling to the final acceptor ubiquinone. Contains FMN, which is the initial electron acceptor as well as one iron-sulfur cluster. This is NADH dehydrogenase [ubiquinone] flavoprotein 1, mitochondrial from Homo sapiens (Human).